Reading from the N-terminus, the 484-residue chain is Glutamate--tRNA ligase (484 aa).

A 'HIGH' region motif is present at residues 12-22 (PSPTGEPHVGT). Positions 253–257 (KLSKR) match the 'KMSKS' region motif. Position 256 (Lys-256) interacts with ATP.

It belongs to the class-I aminoacyl-tRNA synthetase family. Glutamate--tRNA ligase type 1 subfamily. As to quaternary structure, monomer.

Its subcellular location is the cytoplasm. The enzyme catalyses tRNA(Glu) + L-glutamate + ATP = L-glutamyl-tRNA(Glu) + AMP + diphosphate. In terms of biological role, catalyzes the attachment of glutamate to tRNA(Glu) in a two-step reaction: glutamate is first activated by ATP to form Glu-AMP and then transferred to the acceptor end of tRNA(Glu). The chain is Glutamate--tRNA ligase from Rhizobium leguminosarum bv. trifolii (strain WSM2304).